The sequence spans 737 residues: Serine/threonine-protein kinase dst1 (737 aa).

Residues 29 to 281 enclose the Protein kinase domain; the sequence is YHIQERLGKG…AKELLNHEFI (253 aa). Residues 35–43 and lysine 58 each bind ATP; that span reads LGKGSFGQV. Aspartate 149 (proton acceptor) is an active-site residue. Disordered regions lie at residues 305-356, 372-475, 491-559, and 575-631; these read SMFE…SNNY, KDDA…TTDQ, KPIT…ISNN, and NNNI…ESLS. Low complexity-rich tracts occupy residues 334-345, 401-410, 425-444, and 454-473; these read NNNTVTNYSTVI, SSCSSSSSSS, PITN…NKIP, and ATTT…STTT. Polar residues predominate over residues 491 to 503; the sequence is KPITSSNSTSVTP. Low complexity predominate over residues 510-525; it reads SNNTTTTSNINTPIKP. 2 stretches are compositionally biased toward polar residues: residues 529-554 and 585-596; these read LKKS…TPLK and SPTTGQKIIKTN. Residues 597–615 are compositionally biased toward low complexity; sequence SGGVLKSSGGLSSKRSPSS.

The protein belongs to the protein kinase superfamily. STE Ser/Thr protein kinase family. STE20 subfamily. Requires Mg(2+) as cofactor.

It carries out the reaction L-seryl-[protein] + ATP = O-phospho-L-seryl-[protein] + ADP + H(+). It catalyses the reaction L-threonyl-[protein] + ATP = O-phospho-L-threonyl-[protein] + ADP + H(+). The protein is Serine/threonine-protein kinase dst1 of Dictyostelium discoideum (Social amoeba).